The primary structure comprises 354 residues: Guanine nucleotide-binding protein G(i) subunit alpha-3 (354 aa).

A lipid anchor (N-myristoyl glycine) is attached at G2. A lipid anchor (S-palmitoyl cysteine) is attached at C3. Residues 32–354 enclose the G-alpha domain; it reads KEVKLLLLGA…KNNLKECGLY (323 aa). The tract at residues 35 to 48 is G1 motif; the sequence is KLLLLGAGESGKST. The GTP site is built by G42, E43, S44, G45, K46, S47, T48, D150, S151, L175, R176, T177, R178, V179, K180, T181, V201, G203, N269, K270, D272, L273, C325, A326, and T327. S47 is a Mg(2+) binding site. A G2 motif region spans residues 173–181; sequence DVLRTRVKT. T181 is a binding site for Mg(2+). Residues 196–205 are G3 motif; sequence FKMFDVGGQR. The interval 265–272 is G4 motif; it reads ILFLNKKD. Positions 324–329 are G5 motif; that stretch reads TCATDT.

It belongs to the G-alpha family. G(i/o/t/z) subfamily. As to quaternary structure, heterotrimeric G proteins are composed of 3 units; alpha, beta and gamma. The alpha subunit contains the guanine nucleotide binding site. GTP binding causes dissociation of the heterotrimer, liberating the individual subunits so that they can interact with downstream effector proteins. Forms a complex with CCDC88A/GIV and EGFR which leads to enhanced EGFR signaling and triggering of cell migration; ligand stimulation is required for recruitment of GNAI3 to the complex. Interacts (inactive GDP-bound form) with CCDC88A/GIV (via GBA motif); the interaction leads to activation of GNAI3. Interacts (inactive GDP-bound form) with CCDC88C/DAPLE (via GBA motif); the interaction leads to activation of GNAI3. Interacts (inactive GDP-bound form) with NUCB1 (via GBA motif) and NUCB2 (via GBA motif); the interaction leads to activation of GNAI3. Interacts (inactive GDP-bound form) with PLCD4 (via GBA motif); the interaction leads to activation of GNAI3. Interacts with INSR; the interaction is probably mediated by CCDC88A/GIV. Interacts with GPSM1. Interacts (GDP-bound form) with GPSM2 (via GoLoco domains). Does not interact with RGS2. Interacts with RGS8 and RGS10; this strongly enhances the intrinsic GTPase activity. Interacts with RGS12. Interacts with RGS16; this strongly enhances the intrinsic GTPase activity. Interacts (via active GTP- or inactive GDP-bound form) with RGS14. Interacts (via active GTP-bound form) with TRPC5 (via ANK repeats) in a homotetrameric ion channel; the interaction is direct and activates the channel activity. As to expression, ubiquitous.

The protein localises to the cytoplasm. It is found in the cell membrane. The protein resides in the cytoskeleton. Its subcellular location is the microtubule organizing center. It localises to the centrosome. Functionally, heterotrimeric guanine nucleotide-binding proteins (G proteins) function as transducers downstream of G protein-coupled receptors (GPCRs) in numerous signaling cascades. The alpha chain contains the guanine nucleotide binding site and alternates between an active, GTP-bound state and an inactive, GDP-bound state. Signaling by an activated GPCR promotes GDP release and GTP binding. The alpha subunit has a low GTPase activity that converts bound GTP to GDP, thereby terminating the signal. Both GDP release and GTP hydrolysis are modulated by numerous regulatory proteins. Signaling is mediated via effector proteins, such as adenylate cyclase. Inhibits adenylate cyclase activity, leading to decreased intracellular cAMP levels. Stimulates the activity of receptor-regulated K(+) channels. The active GTP-bound form prevents the association of RGS14 with centrosomes and is required for the translocation of RGS14 from the cytoplasm to the plasma membrane. May play a role in cell division. The active GTP-bound form activates the calcium permeant TRPC5 ion channels. The protein is Guanine nucleotide-binding protein G(i) subunit alpha-3 (Gnai3) of Rattus norvegicus (Rat).